An 859-amino-acid polypeptide reads, in one-letter code: Mycobactin import ATP-binding/permease protein IrtA (859 aa).

Topologically, residues 1–292 (MARGLQGVML…SRLLAPLKLP (292 aa)) are cytoplasmic. Residues 15–122 (ARDHTATVIE…MSLMGSSRFD (108 aa)) form the FAD-binding FR-type domain. Residues 70–73 (RAYT), 87–91 (DVVLH), and 97–98 (AS) each bind FAD. A disordered region spans residues 247 to 267 (HRATEPAATEPEVGAAPQPES). A helical transmembrane segment spans residues 293 to 313 (LVLSGVLAALVTLAQLAPFVL). In terms of domain architecture, ABC transmembrane type-1 spans 293 to 575 (LVLSGVLAAL…IAYGLGGLRT (283 aa)). Residues 314–334 (LVELSRLLVSGAGAHRLFTVG) lie on the Periplasmic side of the membrane. Residues 335–355 (FAAVGLLGTGALLAAALTLWL) form a helical membrane-spanning segment. Over 356–408 (HVIDARFARALRLRLLSKLSRLPLGWFTSRGSGSIKKLVTDDTLALHYLVTHA) the chain is Cytoplasmic. The helical transmembrane segment at 409–429 (VPDAVAAVVAPVGVLVYLFVV) threads the bilayer. Residues 430 to 432 (DWR) are Periplasmic-facing. The chain crosses the membrane as a helical span at residues 433–453 (VALVLFGPVLVYLTITSSLTI). Topologically, residues 454–519 (QSGPRIVQAQ…PLAGKKTLMD (66 aa)) are cytoplasmic. The helical transmembrane segment at 520–540 (LATRPATFLWLIAATGTLLVA) threads the bilayer. Residues 541–548 (THRMDPVN) are Periplasmic-facing. Residues 549–569 (LLPFMFLGTTFGARLLGIAYG) form a helical membrane-spanning segment. Over 570-859 (LGGLRTGLLA…AVAAAQDGTR (290 aa)) the chain is Cytoplasmic. Residues 610 to 843 (VVFDHVTFGY…GGRYCRLWDT (234 aa)) enclose the ABC transporter domain. 643–650 (GPSGSGKS) serves as a coordination point for ATP.

Belongs to the ABC transporter superfamily. Siderophore-Fe(3+) uptake transporter (SIUT) (TC 3.A.1.21) family. Forms a heterodimer with IrtB. Requires FAD as cofactor.

It is found in the cell inner membrane. Its function is as follows. Part of the ABC transporter complex IrtAB involved in the import of iron-bound mycobactin (Fe-MBT) and carboxymycobactin (Fe-cMBT). Mycobactins are then reduced by the siderophore interaction domain to facilitate iron release in the bacterial cell. Transmembrane domains (TMD) form a pore in the membrane and the ATP-binding domain (NBD) is responsible for energy generation. Required for replication in human macrophages and in mouse lungs. The sequence is that of Mycobactin import ATP-binding/permease protein IrtA (irtA) from Mycobacterium tuberculosis (strain ATCC 25618 / H37Rv).